Reading from the N-terminus, the 370-residue chain is Cobalt-precorrin-5B C(1)-methyltransferase (370 aa).

The protein belongs to the CbiD family.

The catalysed reaction is Co-precorrin-5B + S-adenosyl-L-methionine = Co-precorrin-6A + S-adenosyl-L-homocysteine. Its pathway is cofactor biosynthesis; adenosylcobalamin biosynthesis; cob(II)yrinate a,c-diamide from sirohydrochlorin (anaerobic route): step 6/10. In terms of biological role, catalyzes the methylation of C-1 in cobalt-precorrin-5B to form cobalt-precorrin-6A. The protein is Cobalt-precorrin-5B C(1)-methyltransferase of Prochlorococcus marinus (strain MIT 9312).